We begin with the raw amino-acid sequence, 101 residues long: Integration host factor subunit beta (101 aa).

This sequence belongs to the bacterial histone-like protein family. In terms of assembly, heterodimer of an alpha and a beta chain.

In terms of biological role, this protein is one of the two subunits of integration host factor, a specific DNA-binding protein that functions in genetic recombination as well as in transcriptional and translational control. The polypeptide is Integration host factor subunit beta (Janthinobacterium sp. (strain Marseille) (Minibacterium massiliensis)).